Consider the following 291-residue polypeptide: Urease accessory protein UreD (291 aa).

This sequence belongs to the UreD family. In terms of assembly, ureD, UreF and UreG form a complex that acts as a GTP-hydrolysis-dependent molecular chaperone, activating the urease apoprotein by helping to assemble the nickel containing metallocenter of UreC. The UreE protein probably delivers the nickel.

It localises to the cytoplasm. Functionally, required for maturation of urease via the functional incorporation of the urease nickel metallocenter. This chain is Urease accessory protein UreD, found in Acinetobacter baumannii (strain ATCC 17978 / DSM 105126 / CIP 53.77 / LMG 1025 / NCDC KC755 / 5377).